The primary structure comprises 572 residues: Probable D-xylulose kinase A (572 aa).

Substrate is bound by residues His-95, Arg-166, Asp-282, and Asn-283. ATP is bound by residues Trp-365, 470 to 471 (GG), and Asn-474.

This sequence belongs to the FGGY kinase family.

Its subcellular location is the cytoplasm. The catalysed reaction is D-xylulose + ATP = D-xylulose 5-phosphate + ADP + H(+). Functionally, highly specific D-xylulose kinase which participates in the catabolism of xylose. Xylose is a major component of hemicelluloses such as xylan. Most fungi utilize D-xylose via three enzymatic reactions, xylose reductase (XR), xylitol dehydrogenase (XDH), and xylulokinase, to form xylulose 5-phosphate, which enters pentose phosphate pathway. This Aspergillus flavus (strain ATCC 200026 / FGSC A1120 / IAM 13836 / NRRL 3357 / JCM 12722 / SRRC 167) protein is Probable D-xylulose kinase A (xkiA).